Consider the following 556-residue polypeptide: Formate--tetrahydrofolate ligase (556 aa).

65–72 (TPAGEGKS) lines the ATP pocket.

It belongs to the formate--tetrahydrofolate ligase family.

It carries out the reaction (6S)-5,6,7,8-tetrahydrofolate + formate + ATP = (6R)-10-formyltetrahydrofolate + ADP + phosphate. It participates in one-carbon metabolism; tetrahydrofolate interconversion. The sequence is that of Formate--tetrahydrofolate ligase from Clostridium acetobutylicum (strain ATCC 824 / DSM 792 / JCM 1419 / IAM 19013 / LMG 5710 / NBRC 13948 / NRRL B-527 / VKM B-1787 / 2291 / W).